The chain runs to 257 residues: Pimeloyl-[acyl-carrier protein] methyl ester esterase (257 aa).

The region spanning 16–240 (LVLIHGWGMN…EQASHAPFIS (225 aa)) is the AB hydrolase-1 domain. Substrate-binding positions include W22, 82 to 83 (SL), and 143 to 147 (FMALQ). S82 serves as the catalytic Nucleophile. Active-site residues include D207 and H235. H235 is a binding site for substrate.

This sequence belongs to the AB hydrolase superfamily. Carboxylesterase BioH family. Monomer.

The protein localises to the cytoplasm. The enzyme catalyses 6-carboxyhexanoyl-[ACP] methyl ester + H2O = 6-carboxyhexanoyl-[ACP] + methanol + H(+). Its pathway is cofactor biosynthesis; biotin biosynthesis. The physiological role of BioH is to remove the methyl group introduced by BioC when the pimeloyl moiety is complete. It allows to synthesize pimeloyl-ACP via the fatty acid synthetic pathway through the hydrolysis of the ester bonds of pimeloyl-ACP esters. The protein is Pimeloyl-[acyl-carrier protein] methyl ester esterase of Aliivibrio fischeri (strain ATCC 700601 / ES114) (Vibrio fischeri).